We begin with the raw amino-acid sequence, 776 residues long: Transcription factor MYB3R-1 (776 aa).

Residues 1-41 (MKREMKAPTTPLESLQGDLKGKQGRTSGPARRSTKGQWTPE) form a disordered region. HTH myb-type domains lie at 30–81 (ARRS…QKVL), 82–137 (NPEL…NPGI), and 138–188 (NKNA…KKKL). 3 consecutive DNA-binding regions (H-T-H motif) follow at residues 58 to 81 (WKKIAECFKDRTDVQCLHRWQKVL), 110 to 133 (WSTISQHLPGRIGKQCRERWHNHL), and 161 to 184 (WAELMKFLPGRSDNSIKNHWNSSV). Disordered stretches follow at residues 217 to 253 (SSWMHSNGDEGSSRPGVDAEESECSQASTVFSQSTND), 364 to 384 (FQSSVRLSDQPFLSNSDTDPE), and 401 to 435 (DNMKDSSTSSGEQGRNMVDPQNGKGSLCSQAAETH). Composition is skewed to polar residues over residues 240–253 (CSQASTVFSQSTND), 364–380 (FQSSVRLSDQPFLSNSD), and 423–432 (GKGSLCSQAA). The Nuclear localization signal signature appears at 648 to 655 (KKRHRDLL).

As to quaternary structure, component of a DREAM-like complex which modulates a variety of developmentally regulated genes and of the mitotic genes in proliferating and differentiated cells. Expressed ubiquitously at low levels. Expressed in roots, cotyledons, flowers and leaves, especially in vascular tissues.

The protein resides in the nucleus. Functionally, transcription factor that binds 5'-AACGG-3' motifs in gene promoters. Transcription activator involved in the regulation of cytokinesis, probably via the activation of several G2/M phase-specific genes transcription (e.g. KNOLLE). Transcription repressor that regulates organ growth. Binds to the promoters of G2/M-specific genes and to E2F target genes to prevent their expression in post-mitotic cells and to restrict the time window of their expression in proliferating cells. Required for the maintenance of diploidy. In Arabidopsis thaliana (Mouse-ear cress), this protein is Transcription factor MYB3R-1.